A 420-amino-acid chain; its full sequence is Protein disulfide isomerase Creld1 (420 aa).

An N-terminal signal peptide occupies residues 1 to 29; the sequence is MAPLPPRGLVPSLLWCLSLFLSLPGPVWL. Over 30–362 the chain is Extracellular; it reads QPSPPPHPSP…GFFAEMTEDE (333 aa). The CXXC motif lies at 46–49; the sequence is CHTC. Intrachain disulfides connect Cys-46–Cys-49, Cys-155–Cys-169, Cys-163–Cys-181, and Cys-183–Cys-192. In terms of domain architecture, EGF-like 1 spans 153-193; it reads LPCPGGTERPCGGYGQCEGEGTRGGSGHCDCQAGYGGEACG. An N-linked (GlcNAc...) asparagine glycan is attached at Asn-205. FU repeat units lie at residues 208–255 and 268–315; these read HLVC…EQAT and SYEC…VVCP. Residues 278 to 281 carry the CXXC motif; that stretch reads CLGC. Intrachain disulfides connect Cys-278–Cys-281, Cys-309–Cys-321, Cys-314–Cys-330, and Cys-332–Cys-343. The region spanning 305–342 is the EGF-like 2; calcium-binding domain; it reads DVDECETVVCPGENEKCENTEGGYRCVCAEGYRQEDGI. The helical transmembrane segment at 363–383 threads the bilayer; that stretch reads MVVLQQMFFGVIICALATLAA. A topological domain (cytoplasmic) is located at residue Lys-384. A helical membrane pass occupies residues 385–405; that stretch reads GDLVFTAIFIGAVAAMTGYWL. Over 406-420 the chain is Extracellular; sequence SERSDRVLEGFIKGR.

The protein belongs to the CRELD family. Expressed in myoblast C2C12 cells (at protein level).

The protein localises to the membrane. It catalyses the reaction Catalyzes the rearrangement of -S-S- bonds in proteins.. Its function is as follows. Protein disulfide isomerase. Promotes the localization of acetylcholine receptors (AChRs) to the plasma membrane. In Mus musculus (Mouse), this protein is Protein disulfide isomerase Creld1 (Creld1).